The following is a 121-amino-acid chain: Large ribosomal subunit protein bL12 (121 aa).

It belongs to the bacterial ribosomal protein bL12 family. In terms of assembly, homodimer. Part of the ribosomal stalk of the 50S ribosomal subunit. Forms a multimeric L10(L12)X complex, where L10 forms an elongated spine to which 2 to 4 L12 dimers bind in a sequential fashion. Binds GTP-bound translation factors.

In terms of biological role, forms part of the ribosomal stalk which helps the ribosome interact with GTP-bound translation factors. Is thus essential for accurate translation. This chain is Large ribosomal subunit protein bL12, found in Vibrio atlanticus (strain LGP32) (Vibrio splendidus (strain Mel32)).